The sequence spans 308 residues: Transaldolase (308 aa).

K125 acts as the Schiff-base intermediate with substrate in catalysis.

Belongs to the transaldolase family. Type 1 subfamily. As to quaternary structure, homodimer.

It is found in the cytoplasm. It carries out the reaction D-sedoheptulose 7-phosphate + D-glyceraldehyde 3-phosphate = D-erythrose 4-phosphate + beta-D-fructose 6-phosphate. Its pathway is carbohydrate degradation; pentose phosphate pathway; D-glyceraldehyde 3-phosphate and beta-D-fructose 6-phosphate from D-ribose 5-phosphate and D-xylulose 5-phosphate (non-oxidative stage): step 2/3. Transaldolase is important for the balance of metabolites in the pentose-phosphate pathway. The sequence is that of Transaldolase from Pseudomonas putida (strain W619).